The chain runs to 144 residues: Large ribosomal subunit protein uL14 (144 aa).

The protein belongs to the universal ribosomal protein uL14 family. As to quaternary structure, part of the 50S ribosomal subunit. Forms a cluster with proteins L3 and L24e, part of which may contact the 16S rRNA in 2 intersubunit bridges.

Functionally, binds to 23S rRNA. Forms part of two intersubunit bridges in the 70S ribosome. This is Large ribosomal subunit protein uL14 from Caldivirga maquilingensis (strain ATCC 700844 / DSM 13496 / JCM 10307 / IC-167).